The primary structure comprises 260 residues: Thymidylate synthase (260 aa).

Arg-21 is a binding site for dUMP. His-51 is a binding site for (6R)-5,10-methylene-5,6,7,8-tetrahydrofolate. 122-123 (RR) is a binding site for dUMP. Residue Cys-142 is the Nucleophile of the active site. Residues 162 to 165 (RSAD), Asn-173, and 203 to 205 (HLY) contribute to the dUMP site. Asp-165 contributes to the (6R)-5,10-methylene-5,6,7,8-tetrahydrofolate binding site. Ala-259 is a (6R)-5,10-methylene-5,6,7,8-tetrahydrofolate binding site.

Belongs to the thymidylate synthase family. Bacterial-type ThyA subfamily. As to quaternary structure, homodimer.

It is found in the cytoplasm. It carries out the reaction dUMP + (6R)-5,10-methylene-5,6,7,8-tetrahydrofolate = 7,8-dihydrofolate + dTMP. The protein operates within pyrimidine metabolism; dTTP biosynthesis. Its function is as follows. Catalyzes the reductive methylation of 2'-deoxyuridine-5'-monophosphate (dUMP) to 2'-deoxythymidine-5'-monophosphate (dTMP) while utilizing 5,10-methylenetetrahydrofolate (mTHF) as the methyl donor and reductant in the reaction, yielding dihydrofolate (DHF) as a by-product. This enzymatic reaction provides an intracellular de novo source of dTMP, an essential precursor for DNA biosynthesis. The sequence is that of Thymidylate synthase from Methylococcus capsulatus (strain ATCC 33009 / NCIMB 11132 / Bath).